Here is a 154-residue protein sequence, read N- to C-terminus: Methylglyoxal synthase (154 aa).

An MGS-like domain is found at 6–154 (SPLPANKAIA…AYMARRAQGN (149 aa)). Substrate is bound by residues H19, K23, 45-48 (TGTT), and 65-66 (SG). Residue D71 is the Proton donor/acceptor of the active site. H98 provides a ligand contact to substrate.

Belongs to the methylglyoxal synthase family.

It catalyses the reaction dihydroxyacetone phosphate = methylglyoxal + phosphate. Catalyzes the formation of methylglyoxal from dihydroxyacetone phosphate. This is Methylglyoxal synthase from Cellvibrio japonicus (strain Ueda107) (Pseudomonas fluorescens subsp. cellulosa).